Reading from the N-terminus, the 199-residue chain is Imidazole glycerol phosphate synthase subunit HisH 2 (199 aa).

The region spanning 1 to 199 is the Glutamine amidotransferase type-1 domain; sequence MIAVIDVSGN…NNFLSLESTC (199 aa). Catalysis depends on cysteine 76, which acts as the Nucleophile. Residues histidine 177 and glutamate 179 contribute to the active site.

As to quaternary structure, heterodimer of HisH and HisF.

It is found in the cytoplasm. The enzyme catalyses 5-[(5-phospho-1-deoxy-D-ribulos-1-ylimino)methylamino]-1-(5-phospho-beta-D-ribosyl)imidazole-4-carboxamide + L-glutamine = D-erythro-1-(imidazol-4-yl)glycerol 3-phosphate + 5-amino-1-(5-phospho-beta-D-ribosyl)imidazole-4-carboxamide + L-glutamate + H(+). The catalysed reaction is L-glutamine + H2O = L-glutamate + NH4(+). It functions in the pathway amino-acid biosynthesis; L-histidine biosynthesis; L-histidine from 5-phospho-alpha-D-ribose 1-diphosphate: step 5/9. Its function is as follows. IGPS catalyzes the conversion of PRFAR and glutamine to IGP, AICAR and glutamate. The HisH subunit provides the glutamine amidotransferase activity that produces the ammonia necessary to HisF for the synthesis of IGP and AICAR. This is Imidazole glycerol phosphate synthase subunit HisH 2 from Legionella pneumophila (strain Paris).